The chain runs to 334 residues: Protein-methionine-sulfoxide reductase catalytic subunit MsrP (334 aa).

The segment at residues 1–44 is a signal peptide (tat-type signal); it reads MKKNQFLKESDVTAESVFFMTRRQVLKALGISAAALSLPHAAHA. Mo-molybdopterin is bound by residues Asn-88, 91 to 92, Cys-146, Thr-181, Asn-233, Arg-238, and 249 to 251; these read YE and GIK.

This sequence belongs to the MsrP family. As to quaternary structure, heterodimer of a catalytic subunit (MsrP) and a heme-binding subunit (MsrQ). Mo-molybdopterin is required as a cofactor. Post-translationally, predicted to be exported by the Tat system. The position of the signal peptide cleavage has not been experimentally proven.

The protein resides in the periplasm. It catalyses the reaction L-methionyl-[protein] + a quinone + H2O = L-methionyl-(S)-S-oxide-[protein] + a quinol. It carries out the reaction L-methionyl-[protein] + a quinone + H2O = L-methionyl-(R)-S-oxide-[protein] + a quinol. Functionally, part of the MsrPQ system that repairs oxidized periplasmic proteins containing methionine sulfoxide residues (Met-O), using respiratory chain electrons. Thus protects these proteins from oxidative-stress damage caused by reactive species of oxygen and chlorine generated by the host defense mechanisms. MsrPQ is essential for the maintenance of envelope integrity under bleach stress, rescuing a wide series of structurally unrelated periplasmic proteins from methionine oxidation, including the primary periplasmic chaperone SurA and the lipoprotein Pal. The catalytic subunit MsrP is non-stereospecific, being able to reduce both (R-) and (S-) diastereoisomers of methionine sulfoxide. This chain is Protein-methionine-sulfoxide reductase catalytic subunit MsrP, found in Escherichia coli (strain 55989 / EAEC).